We begin with the raw amino-acid sequence, 116 residues long: NADH-ubiquinone oxidoreductase chain 3 (116 aa).

A run of 3 helical transmembrane segments spans residues 3–23 (LITT…TISF), 56–76 (FFLI…LLPL), and 87–107 (LTLI…IYEW).

Belongs to the complex I subunit 3 family.

It is found in the mitochondrion membrane. It catalyses the reaction a ubiquinone + NADH + 5 H(+)(in) = a ubiquinol + NAD(+) + 4 H(+)(out). Functionally, core subunit of the mitochondrial membrane respiratory chain NADH dehydrogenase (Complex I) that is believed to belong to the minimal assembly required for catalysis. Complex I functions in the transfer of electrons from NADH to the respiratory chain. The immediate electron acceptor for the enzyme is believed to be ubiquinone. This Oncorhynchus mykiss (Rainbow trout) protein is NADH-ubiquinone oxidoreductase chain 3 (MT-ND3).